A 183-amino-acid chain; its full sequence is Dual-action ribosomal maturation protein DarP (183 aa).

Residues 1-20 (MKQKYEDWLNDVPDNQEDDE) form a disordered region.

It belongs to the DarP family.

Its subcellular location is the cytoplasm. Functionally, member of a network of 50S ribosomal subunit biogenesis factors which assembles along the 30S-50S interface, preventing incorrect 23S rRNA structures from forming. Promotes peptidyl transferase center (PTC) maturation. The sequence is that of Dual-action ribosomal maturation protein DarP from Pectobacterium carotovorum subsp. carotovorum (strain PC1).